The primary structure comprises 233 residues: Demethylmenaquinone methyltransferase (233 aa).

S-adenosyl-L-methionine-binding positions include T58, D79, and 106-107 (NA).

It belongs to the class I-like SAM-binding methyltransferase superfamily. MenG/UbiE family.

The catalysed reaction is a 2-demethylmenaquinol + S-adenosyl-L-methionine = a menaquinol + S-adenosyl-L-homocysteine + H(+). It participates in quinol/quinone metabolism; menaquinone biosynthesis; menaquinol from 1,4-dihydroxy-2-naphthoate: step 2/2. In terms of biological role, methyltransferase required for the conversion of demethylmenaquinol (DMKH2) to menaquinol (MKH2). This chain is Demethylmenaquinone methyltransferase, found in Bacillus velezensis (strain DSM 23117 / BGSC 10A6 / LMG 26770 / FZB42) (Bacillus amyloliquefaciens subsp. plantarum).